Reading from the N-terminus, the 293-residue chain is AKT-interacting protein (293 aa).

A compositionally biased stretch (polar residues) spans 1–11 (MNPFWSMSTNA). Positions 1 to 44 (MNPFWSMSTNAGRKRSDGEEQSGSGEQRASPARPPFGKKQLPSI) are disordered. The UBC core domain occupies 75-223 (YLEYSLLAEF…VVDSVKLCNS (149 aa)). A disordered region spans residues 260–293 (RPEDFNKGLPVSGLSWVKPGSTQPFSKEDNPLQT).

Belongs to the ubiquitin-conjugating enzyme family. FTS subfamily.

Its subcellular location is the cytoplasm. It is found in the cell membrane. In terms of biological role, may function to promote vesicle trafficking and/or fusion. May also regulate apoptosis. This Danio rerio (Zebrafish) protein is AKT-interacting protein (aktip).